A 1072-amino-acid chain; its full sequence is DNA-directed RNA polymerase subunit beta (1072 aa).

The protein belongs to the RNA polymerase beta chain family. As to quaternary structure, in plastids the minimal PEP RNA polymerase catalytic core is composed of four subunits: alpha, beta, beta', and beta''. When a (nuclear-encoded) sigma factor is associated with the core the holoenzyme is formed, which can initiate transcription.

The protein resides in the plastid. The protein localises to the chloroplast. The catalysed reaction is RNA(n) + a ribonucleoside 5'-triphosphate = RNA(n+1) + diphosphate. In terms of biological role, DNA-dependent RNA polymerase catalyzes the transcription of DNA into RNA using the four ribonucleoside triphosphates as substrates. In Crucihimalaya wallichii (Rock-cress), this protein is DNA-directed RNA polymerase subunit beta.